A 152-amino-acid chain; its full sequence is Nucleoside diphosphate kinase A (152 aa).

Residues Lys12, Phe60, Arg88, and Thr94 each coordinate ATP. Lys100 participates in a covalent cross-link: Glycyl lysine isopeptide (Lys-Gly) (interchain with G-Cter in ubiquitin). Residues Arg105 and Asn115 each coordinate ATP. The active-site Pros-phosphohistidine intermediate is His118. Residues Ser120, Ser122, and Ser125 each carry the phosphoserine modification.

It belongs to the NDK family. As to quaternary structure, hexamer of two different chains: An and B (A6, A5B, A4B2, A3B3, A2B4, AB5, B6). Interacts with PRUNE1. Component of the SET complex, composed of at least ANP32A, APEX1, HMGB2, NME1, SET and TREX1. Within this complex, interacts directly with SET. Also interacts with TREX1, but only following translocation to the nucleus. It depends on Mg(2+) as a cofactor.

The protein resides in the cytoplasm. The protein localises to the nucleus. It catalyses the reaction a 2'-deoxyribonucleoside 5'-diphosphate + ATP = a 2'-deoxyribonucleoside 5'-triphosphate + ADP. The catalysed reaction is a ribonucleoside 5'-diphosphate + ATP = a ribonucleoside 5'-triphosphate + ADP. Autophosphorylation at His-118 increases serine/threonine protein kinase activity of the enzyme. Interaction with the SET complex inhibits exonuclease activity. Its function is as follows. Major role in the synthesis of nucleoside triphosphates other than ATP. The ATP gamma phosphate is transferred to the NDP beta phosphate via a ping-pong mechanism, using a phosphorylated active-site intermediate. Possesses nucleoside-diphosphate kinase, serine/threonine-specific protein kinase, geranyl and farnesyl pyrophosphate kinase, histidine protein kinase and 3'-5' exonuclease activities. Involved in cell proliferation, differentiation and development, signal transduction, G protein-coupled receptor endocytosis, and gene expression. Required for neural development including neural patterning and cell fate determination. During GZMA-mediated cell death, works in concert with TREX1. NME1 nicks one strand of DNA and TREX1 removes bases from the free 3' end to enhance DNA damage and prevent DNA end reannealing and rapid repair. The polypeptide is Nucleoside diphosphate kinase A (Nme1) (Rattus norvegicus (Rat)).